A 446-amino-acid chain; its full sequence is Nucleoprotein (446 aa).

The tract at residues 1 to 54 (MSFTPGKQSSSRASSGNRAGNGILKWADQSDQSSNFQTRGRRAQPKQTATSQPA) is disordered. Over residues 9–22 (SSSRASSGNRAGNG) the composition is skewed to low complexity. Composition is skewed to polar residues over residues 29–38 (QSDQSSNFQT) and 45–54 (PKQTATSQPA). The interval 52 to 193 (QPAGGNVVPY…GYYIEGSGRS (142 aa)) is RNA-binding. The CoV N NTD domain maps to 60–189 (PYYSWFSGIT…VLPQGYYIEG (130 aa)). Residues R105, R121, and R163 each coordinate RNA. Disordered stretches follow at residues 157 to 230 (PADV…VTSD), 265 to 290 (ILNK…KRGP), and 381 to 446 (QQDD…NSEM). The residue at position 166 (S166) is a Phosphoserine; by host. Position 173 is a phosphothreonine; by host (T173). Phosphoserine; by host is present on S190. A compositionally biased stretch (low complexity) spans 195–226 (PNSRSTSRASSRASSAGSRNRSNSGTRTPTSG). The CoV N CTD domain occupies 258–383 (AKEVRQKILN…ENLNAYQQQD (126 aa)). Over residues 265 to 275 (ILNKPRQKRSP) the composition is skewed to basic residues. The segment at 265-384 (ILNKPRQKRS…NLNAYQQQDD (120 aa)) is dimerization. 2 positions are modified to phosphoserine; by host: S389 and S421. At T425 the chain carries Phosphothreonine; by host.

Belongs to the betacoronavirus nucleocapsid protein family. In terms of assembly, homooligomer. Both monomeric and oligomeric forms interact with RNA. Interacts with protein M. Interacts with NSP3; this interaction serves to tether the genome to the newly translated replicase-transcriptase complex at a very early stage of infection. Post-translationally, ADP-ribosylated. The ADP-ribosylation is retained in the virion during infection. In terms of processing, phosphorylated on serine and threonine residues.

The protein resides in the virion. It localises to the host endoplasmic reticulum-Golgi intermediate compartment. The protein localises to the host Golgi apparatus. Its function is as follows. Packages the positive strand viral genome RNA into a helical ribonucleocapsid (RNP) and plays a fundamental role during virion assembly through its interactions with the viral genome and membrane protein M. Plays an important role in enhancing the efficiency of subgenomic viral RNA transcription as well as viral replication. The polypeptide is Nucleoprotein (Equine coronavirus (isolate NC99) (ECoV)).